Consider the following 286-residue polypeptide: 2-hydroxy-6-oxo-6-phenylhexa-2,4-dienoate hydrolase (286 aa).

In terms of domain architecture, AB hydrolase-1 spans 36-271 (VIMLHGGGPG…RCGHWAQWEH (236 aa)). Substrate is bound by residues 42 to 43 (GG), N51, N111, S180, and R190. The active-site Proton acceptor is the H265. Position 266 (W266) interacts with substrate.

It belongs to the AB hydrolase superfamily. BphD family. In terms of assembly, homodimer.

It carries out the reaction 2,6-dioxo-6-phenylhexa-3-enoate + H2O = 2-oxopent-4-enoate + benzoate + H(+). It participates in xenobiotic degradation; biphenyl degradation; 2-hydroxy-2,4-pentadienoate and benzoate from biphenyl: step 4/4. In terms of biological role, catalyzes an unusual C-C bond hydrolysis of 2-hydroxy-6-oxo-6-phenylhexa-2,4-dienoic acid (HOPDA) to produce benzoic acid and 2-hydroxy-2,4-pentadienoic acid (HPD). The chain is 2-hydroxy-6-oxo-6-phenylhexa-2,4-dienoate hydrolase from Burkholderia cepacia (Pseudomonas cepacia).